The chain runs to 97 residues: Late transcription unit B protein (97 aa).

The protein is Late transcription unit B protein (ltuB) of Chlamydia muridarum (strain MoPn / Nigg).